The chain runs to 1291 residues: MPVTINNFNYNDPIDNNNIIMMEPPFARGTGRYYKAFKITDRIWIIPERYTFGYKPEDFNKSSGIFNRDVCEYYDPDYLNTNDKKNIFLQTMIKLFNRIKSKPLGEKLLEMIINGIPYLGDRRVPLEEFNTNIASVTVNKLISNPGEVERKKGIFANLIIFGPGPVLNENETIDIGIQNHFASREGFGGIMQMKFCPEYVSVFNNVQENKGASIFNRRGYFSDPALILMHELIHVLHGLYGIKVDDLPIVPNEKKFFMQSTDAIQAEELYTFGGQDPSIITPSTDKSIYDKVLQNFRGIVDRLNKVLVCISDPNININIYKNKFKDKYKFVEDSEGKYSIDVESFDKLYKSLMFGFTETNIAENYKIKTRASYFSDSLPPVKIKNLLDNEIYTIEEGFNISDKDMEKEYRGQNKAINKQAYEEISKEHLAVYKIQMCKSVKAPGICIDVDNEDLFFIADKNSFSDDLSKNERIEYNTQSNYIENDFPINELILDTDLISKIELPSENTESLTDFNVDVPVYEKQPAIKKIFTDENTIFQYLYSQTFPLDIRDISLTSSFDDALLFSNKVYSFFSMDYIKTANKVVEAGLFAGWVKQIVNDFVIEANKSNTMDKIADISLIVPYIGLALNVGNETAKGNFENAFEIAGASILLEFIPELLIPVVGAFLLESYIDNKNKIIKTIDNALTKRNEKWSDMYGLIVAQWLSTVNTQFYTIKEGMYKALNYQAQALEEIIKYRYNIYSEKEKSNINIDFNDINSKLNEGINQAIDNINNFINGCSVSYLMKKMIPLAVEKLLDFDNTLKKNLLNYIDENKLYLIGSAEYEKSKVNKYLKTIMPFDLSIYTNDTILIEMFNKYNSEILNNIILNLRYKDNNLIDLSGYGAKVEVYDGVELNDKNQFKLTSSANSKIRVTQNQNIIFNSVFLDFSVSFWIRIPKYKNDGIQNYIHNEYTIINCMKNNSGWKISIRGNRIIWTLIDINGKTKSVFFEYNIREDISEYINRWFFVTITNNLNNAKIYINGKLESNTDIKDIREVIANGEIIFKLDGDIDRTQFIWMKYFSIFNTELSQSNIEERYKIQSYSEYLKDFWGNPLMYNKEYYMFNAGNKNSYIKLKKDSPVGEILTRSKYNQNSKYINYRDLYIGEKFIIRRKSNSQSINDDIVRKEDYIYLDFFNLNQEWRVYTYKYFKKEEEKLFLAPISDSDEFYNTIQIKEYDEQPTYSCQLLFKKDEESTDEIGLIGIHRFYESGIVFEEYKDYFCISKWYLKEVKRKPYNLKLGCNWQFIPKDEGWTE.

Position 230 (histidine 230) interacts with Zn(2+). Residue glutamate 231 is part of the active site. Histidine 234 and glutamate 268 together coordinate Zn(2+). Cysteine 437 and cysteine 446 form a disulfide bridge. The interval 442 to 857 (APGICIDVDN…ILIEMFNKYN (416 aa)) is translocation domain (TD). Residues 481–532 (YIENDFPINELILDTDLISKIELPSENTESLTDFNVDVPVYEKQPAIKKIFT) form a belt region. The tract at residues 858–1079 (SEILNNIILN…NIEERYKIQS (222 aa)) is N-terminus of receptor binding domain (N-RBD). The C-terminus of receptor binding domain (C-RBD) stretch occupies residues 1080–1291 (YSEYLKDFWG…FIPKDEGWTE (212 aa)). The short motif at 1260 to 1263 (SKWY) is the Host ganglioside-binding motif element.

This sequence belongs to the peptidase M27 family. In terms of assembly, heterodimer; disulfide-linked heterodimer of a light chain (LC) and a heavy chain (HC). Interacts with host synaptic vesicle proteins synaptotagmin-1 and -2 which serve as coreceptors with complex gangliosides. Requires Zn(2+) as cofactor.

Its subcellular location is the secreted. The protein localises to the host synapse. The protein resides in the host presynaptic cell membrane. It localises to the host cytoplasm. It is found in the host cytosol. Its subcellular location is the host cytoplasmic vesicle. The protein localises to the host secretory vesicle. The protein resides in the host synaptic vesicle membrane. The enzyme catalyses Limited hydrolysis of proteins of the neuroexocytosis apparatus, synaptobrevins, SNAP25 or syntaxin. No detected action on small molecule substrates.. In terms of biological role, botulinum toxin causes flaccid paralysis by inhibiting neurotransmitter (acetylcholine) release from the presynaptic membranes of nerve terminals of eukaryotic host skeletal and autonomic nervous system, with frequent heart or respiratory failure. Precursor of botulinum neurotoxin B which has 2 coreceptors; complex polysialylated gangliosides found on neural tissue and specific membrane-anchored proteins found in synaptic vesicles. Receptor proteins are exposed on host presynaptic cell membrane during neurotransmitter release, when the toxin heavy chain (HC) binds to them. Upon synaptic vesicle recycling the toxin is taken up via the endocytic pathway. When the pH of the toxin-containing endosome drops a structural rearrangement occurs so that the N-terminus of the HC forms pores that allows the light chain (LC) to translocate into the cytosol. Once in the cytosol the disulfide bond linking the 2 subunits is reduced and LC cleaves its target protein on synaptic vesicles, preventing their fusion with the cytoplasmic membrane and thus neurotransmitter release. Functionally, has proteolytic activity. After translocation into the eukaryotic host cytosol, LC hydrolyzes the '76-Gln-|-Phe-77' bond in synaptobrevin-2/VAMP2, blocking neurotransmitter release. Responsible for host epithelial cell transcytosis, host nerve cell targeting and translocation of light chain (LC) into host cytosol. Composed of 3 subdomains; the translocation domain (TD), and N-terminus and C-terminus of the receptor-binding domain (RBD). The RBD is responsible for the adherence of the toxin to the cell surface. It simultaneously recognizes 2 coreceptors; polysialated gangliosides and host synaptotagmin-1 and -2 (SYT1 and SYT2) which bind simultaneously to adjacent but separate sites at the tip of the HC. The N-terminus of the TD wraps an extended belt around the perimeter of the LC, protecting Zn(2+) in the active site; it may also prevent premature LC dissociation from the translocation channel and protect toxin prior to translocation. The TD inserts into synaptic vesicle membrane to allow translocation into the host cytosol. The chain is Botulinum neurotoxin type B (botB) from Clostridium botulinum (strain Okra / Type B1).